The primary structure comprises 229 residues: Ribose-5-phosphate isomerase A (229 aa).

Substrate is bound by residues Thr28 to Thr31, Asp84 to Asp87, and Lys97 to Gly100. Glu106 functions as the Proton acceptor in the catalytic mechanism. Residue Lys124 coordinates substrate.

This sequence belongs to the ribose 5-phosphate isomerase family. As to quaternary structure, homodimer.

It carries out the reaction aldehydo-D-ribose 5-phosphate = D-ribulose 5-phosphate. It participates in carbohydrate degradation; pentose phosphate pathway; D-ribose 5-phosphate from D-ribulose 5-phosphate (non-oxidative stage): step 1/1. In terms of biological role, catalyzes the reversible conversion of ribose-5-phosphate to ribulose 5-phosphate. This is Ribose-5-phosphate isomerase A from Lacticaseibacillus paracasei (strain ATCC 334 / BCRC 17002 / CCUG 31169 / CIP 107868 / KCTC 3260 / NRRL B-441) (Lactobacillus paracasei).